Reading from the N-terminus, the 497-residue chain is Probable cytosol aminopeptidase (497 aa).

Positions 267 and 272 each coordinate Mn(2+). The active site involves K279. Mn(2+)-binding residues include D290, D349, and E351. R353 is an active-site residue.

This sequence belongs to the peptidase M17 family. Mn(2+) serves as cofactor.

Its subcellular location is the cytoplasm. It catalyses the reaction Release of an N-terminal amino acid, Xaa-|-Yaa-, in which Xaa is preferably Leu, but may be other amino acids including Pro although not Arg or Lys, and Yaa may be Pro. Amino acid amides and methyl esters are also readily hydrolyzed, but rates on arylamides are exceedingly low.. It carries out the reaction Release of an N-terminal amino acid, preferentially leucine, but not glutamic or aspartic acids.. Presumably involved in the processing and regular turnover of intracellular proteins. Catalyzes the removal of unsubstituted N-terminal amino acids from various peptides. This Nitrosomonas europaea (strain ATCC 19718 / CIP 103999 / KCTC 2705 / NBRC 14298) protein is Probable cytosol aminopeptidase.